The primary structure comprises 320 residues: Nod factor export ATP-binding protein I (320 aa).

The region spanning 15–245 (VSATGVWKKR…LGALKILEID (231 aa)) is the ABC transporter domain. 47-54 (GTNGAGKS) contacts ATP.

Belongs to the ABC transporter superfamily. Lipooligosaccharide exporter (TC 3.A.1.102) family. As to quaternary structure, the complex is composed of two ATP-binding proteins (NodI) and two transmembrane proteins (NodJ).

It is found in the cell inner membrane. In terms of biological role, part of the ABC transporter complex NodIJ involved in the export of the nodulation factors (Nod factors), the bacterial signal molecules that induce symbiosis and subsequent nodulation induction. Nod factors are LCO (lipo-chitin oligosaccharide), a modified beta-1,4-linked N-acetylglucosamine oligosaccharide. This subunit is responsible for energy coupling to the transport system. The protein is Nod factor export ATP-binding protein I of Azorhizobium caulinodans (strain ATCC 43989 / DSM 5975 / JCM 20966 / LMG 6465 / NBRC 14845 / NCIMB 13405 / ORS 571).